Reading from the N-terminus, the 286-residue chain is 4-hydroxybenzoate octaprenyltransferase (286 aa).

The next 8 membrane-spanning stretches (helical) occupy residues 20-40 (IGTL…AQGL), 43-63 (IKVL…GCII), 96-116 (LFTL…PLVV), 142-162 (FLGI…LGEV), 167-187 (WWLF…YAIV), 210-230 (QIIG…GLVA), 235-255 (IYGL…RLIF), and 266-286 (FLNN…DYMI).

It belongs to the UbiA prenyltransferase family. Mg(2+) serves as cofactor.

The protein resides in the cell inner membrane. The catalysed reaction is all-trans-octaprenyl diphosphate + 4-hydroxybenzoate = 4-hydroxy-3-(all-trans-octaprenyl)benzoate + diphosphate. It functions in the pathway cofactor biosynthesis; ubiquinone biosynthesis. Catalyzes the prenylation of para-hydroxybenzoate (PHB) with an all-trans polyprenyl group. Mediates the second step in the final reaction sequence of ubiquinone-8 (UQ-8) biosynthesis, which is the condensation of the polyisoprenoid side chain with PHB, generating the first membrane-bound Q intermediate 3-octaprenyl-4-hydroxybenzoate. In Shewanella frigidimarina (strain NCIMB 400), this protein is 4-hydroxybenzoate octaprenyltransferase.